The primary structure comprises 325 residues: Glutarate 2-hydroxylase (325 aa).

Residues histidine 160, aspartate 162, and histidine 292 each contribute to the Fe cation site.

Belongs to the glutarate hydroxylase family. As to quaternary structure, homotetramer. Requires Fe(2+) as cofactor.

The catalysed reaction is glutarate + 2-oxoglutarate + O2 = (S)-2-hydroxyglutarate + succinate + CO2. Its pathway is amino-acid degradation. Its function is as follows. Acts as an alpha-ketoglutarate-dependent dioxygenase catalyzing hydroxylation of glutarate (GA) to L-2-hydroxyglutarate (L2HG). Functions in a L-lysine degradation pathway that proceeds via cadaverine, glutarate and L-2-hydroxyglutarate. The sequence is that of Glutarate 2-hydroxylase from Salmonella newport (strain SL254).